The sequence spans 337 residues: Pyridoxal 5'-phosphate synthase subunit PdxS (337 aa).

Aspartate 65 is a binding site for D-ribose 5-phosphate. The Schiff-base intermediate with D-ribose 5-phosphate role is filled by lysine 122. Position 194 (glycine 194) interacts with D-ribose 5-phosphate. Lysine 206 is a binding site for D-glyceraldehyde 3-phosphate. D-ribose 5-phosphate is bound by residues glycine 255 and 276–277 (GS).

The protein belongs to the PdxS/SNZ family. In terms of assembly, in the presence of PdxT, forms a dodecamer of heterodimers.

The enzyme catalyses aldehydo-D-ribose 5-phosphate + D-glyceraldehyde 3-phosphate + L-glutamine = pyridoxal 5'-phosphate + L-glutamate + phosphate + 3 H2O + H(+). The protein operates within cofactor biosynthesis; pyridoxal 5'-phosphate biosynthesis. Catalyzes the formation of pyridoxal 5'-phosphate from ribose 5-phosphate (RBP), glyceraldehyde 3-phosphate (G3P) and ammonia. The ammonia is provided by the PdxT subunit. Can also use ribulose 5-phosphate and dihydroxyacetone phosphate as substrates, resulting from enzyme-catalyzed isomerization of RBP and G3P, respectively. This chain is Pyridoxal 5'-phosphate synthase subunit PdxS, found in Pyrobaculum arsenaticum (strain DSM 13514 / JCM 11321 / PZ6).